Reading from the N-terminus, the 99-residue chain is NADH-quinone oxidoreductase subunit K (99 aa).

The next 3 helical transmembrane spans lie at 3-23 (LVNY…TVLV), 28-48 (IIMF…FVAF), and 59-79 (VVAF…LAII).

It belongs to the complex I subunit 4L family. In terms of assembly, NDH-1 is composed of 14 different subunits. Subunits NuoA, H, J, K, L, M, N constitute the membrane sector of the complex.

The protein localises to the cell membrane. The catalysed reaction is a quinone + NADH + 5 H(+)(in) = a quinol + NAD(+) + 4 H(+)(out). In terms of biological role, NDH-1 shuttles electrons from NADH, via FMN and iron-sulfur (Fe-S) centers, to quinones in the respiratory chain. The immediate electron acceptor for the enzyme in this species is believed to be a menaquinone. Couples the redox reaction to proton translocation (for every two electrons transferred, four hydrogen ions are translocated across the cytoplasmic membrane), and thus conserves the redox energy in a proton gradient. This Beutenbergia cavernae (strain ATCC BAA-8 / DSM 12333 / CCUG 43141 / JCM 11478 / NBRC 16432 / NCIMB 13614 / HKI 0122) protein is NADH-quinone oxidoreductase subunit K.